Consider the following 188-residue polypeptide: Small ribosomal subunit protein bS18c (188 aa).

The segment covering 1–19 (MNNQSFNNFSQVNSNSSFF) has biased composition (low complexity). The disordered stretch occupies residues 1–79 (MNNQSFNNFS…TSNKRKVLSV (79 aa)). Residues 25 to 71 (NLQNTNLEMTNGTNPPSSFSKQTPQKRQSFGTNTNFSKGNSSRGSTS) show a composition bias toward polar residues.

It belongs to the bacterial ribosomal protein bS18 family. As to quaternary structure, part of the 30S ribosomal subunit.

It localises to the plastid. The protein resides in the chloroplast. This chain is Small ribosomal subunit protein bS18c, found in Tetradesmus obliquus (Green alga).